We begin with the raw amino-acid sequence, 481 residues long: MVIFEKTRGKNSPSVMPSKKGDVSNIPANMLRSKKPILPEQAELDVVRHYTQLSRKNFCIDTNFYPLGSCTMKYNPRAAHKYASLAGFLERHPYASAQSVQGTLECLYDLQNLIKELTGMTGVSLAPMAGAQGEFAGVAMIKAYHHKRGDFERDEIIVPDAAHGTNPATAKVCGLKVIEIPTKKDGDIDIEALDKVLGPKTAGIMLTNPSTVGVFERNIAVIAKKVHEAGGLLYYDGANLNAIMGKARPGDMGFDVLHMNLHKTFATPHGGGGPGAGPVAVNDKLKEFLPVPMVGKKADKFVWLEEKDVPNTIGRLSAFNGNIGVLIRAYIYGAMLGGNGLTEASKIATLNANYMMARLKQEGFTIAYPERRASHEFIVTLKPEFQNYGVTATDFAKCLIDRGVHAPTMYFPLLVPECLLIEPTETENVDSMEKFIQAMVEIRDIAKKDPQYLKGAPYNLPARRLDDVKAAKELDIVWQPK.

The tract at residues 1–23 (MVIFEKTRGKNSPSVMPSKKGDV) is disordered. The residue at position 263 (K263) is an N6-(pyridoxal phosphate)lysine.

The protein belongs to the GcvP family. C-terminal subunit subfamily. In terms of assembly, the glycine cleavage system is composed of four proteins: P, T, L and H. In this organism, the P 'protein' is a heterodimer of two subunits. The cofactor is pyridoxal 5'-phosphate.

It carries out the reaction N(6)-[(R)-lipoyl]-L-lysyl-[glycine-cleavage complex H protein] + glycine + H(+) = N(6)-[(R)-S(8)-aminomethyldihydrolipoyl]-L-lysyl-[glycine-cleavage complex H protein] + CO2. Functionally, the glycine cleavage system catalyzes the degradation of glycine. The P protein binds the alpha-amino group of glycine through its pyridoxal phosphate cofactor; CO(2) is released and the remaining methylamine moiety is then transferred to the lipoamide cofactor of the H protein. In Francisella philomiragia subsp. philomiragia (strain ATCC 25017 / CCUG 19701 / FSC 153 / O#319-036), this protein is Probable glycine dehydrogenase (decarboxylating) subunit 2.